We begin with the raw amino-acid sequence, 477 residues long: Cytochrome P450 monooxygenase poxC (477 aa).

A helical transmembrane segment spans residues 24 to 41 (AWHFAVLSFVYVIARSIY). Residue C420 participates in heme binding.

It belongs to the cytochrome P450 family. Heme is required as a cofactor.

The protein localises to the membrane. It functions in the pathway secondary metabolite biosynthesis. Cytochrome P450 monooxygenase; part of the gene cluster that mediates the biosynthesis of oxaleimides, cytotoxic compounds containing an unusual disubstituted succinimide moiety. The first step of the pathway is provided by the HR-PKS poxF that serves in a new mode of collaborative biosynthesis with the PKS-NRPS poxE, by providing the olefin containing amino acid substrate via the synthesis of an ACP-bound dec-4-enoate. The cytochrome P450 monooxygenase poxM-catalyzed oxidation at the alpha-position creates the enzyme-bound 2-hydroxydec-4-enoyl-ACP thioester, which may be prone to spontaneous hydrolysis to yield 2-hydroxydec-4-enoic acid due to increased electrophilicity of the carbonyl. 2-hydroxydec-4-enoic acid can then be further oxidized by poxM to yield the alpha-ketoacid 2-oxodec-4-enoicacid, which is reductively aminated by the aminotransferase poxL to yield (S,E)-2-aminodec-4-enoic acid. The Hybrid PKS-NRPS synthetase poxE then performs condensation between the octaketide product of its PKS modules and the amino group of (S,E)-2-aminodec-4-enoic acid which is activated and incorporated by the adenylation domain. The resulting aminoacyl product can be cyclized by the Diels-Alderase PoxQ and reductively released by the reductive (R) domain of poxE to yield an aldehyde intermediate. The released aldehyde is then substrate for a Knoevenagel condensation by the hydrolyase poxO followed by an oxidation at the 5-position of the pyrrolidone ring. The presence of the olefin from the amino acid building block allows for migration of the substituted allyl group to occur. This allylic transposition reaction takes place in a conjugate addition, semipinacol-like fashion to yield a succinimide intermediate. Iterative two-electron oxidations of the C7 methyl of the succinimide intermediate to the carboxylic acid can be catalyzed by one of two remaining cytochrome P450 monooxygenasess poxC or poxD to yield oxaleimide A. Subsequent oxidation yields the maleimide scaffold oxaleimide I. Both oxaleimide A and oxaleimide I can undergo oxidative modifications in the decalin ring to yield the series of products oxaleimides B to H. The chain is Cytochrome P450 monooxygenase poxC from Penicillium oxalicum (strain 114-2 / CGMCC 5302) (Penicillium decumbens).